We begin with the raw amino-acid sequence, 700 residues long: UvrABC system protein C (700 aa).

Residues 11–90 (TTPGVYLYKD…IKKHRPRYNI (80 aa)) form the GIY-YIG domain. Residues 200–235 (TELIDMLRADMQAASDALEFEEAALLRDQLQAVERT) form the UVR domain.

The protein belongs to the UvrC family. Interacts with UvrB in an incision complex.

The protein localises to the cytoplasm. Its function is as follows. The UvrABC repair system catalyzes the recognition and processing of DNA lesions. UvrC both incises the 5' and 3' sides of the lesion. The N-terminal half is responsible for the 3' incision and the C-terminal half is responsible for the 5' incision. In Oleidesulfovibrio alaskensis (strain ATCC BAA-1058 / DSM 17464 / G20) (Desulfovibrio alaskensis), this protein is UvrABC system protein C.